We begin with the raw amino-acid sequence, 350 residues long: Sperm equatorial segment protein 1 (350 aa).

A signal peptide spans 1 to 19 (MKPLVLLVALLLWPSSVPA). N-linked (GlcNAc...) asparagine glycosylation is present at asparagine 128.

It belongs to the SPESP1 family. In terms of processing, glycosylated. In testis there are two predominant forms of 77- and 67-kDa and a form of 47-kDa, whereas in epididymal sperm from caput, corpus, and cauda there are two forms of 47- and 43-kDa. Testis forms contain complex carbohydrate residues. Epididymal sperm forms are N-glycosylated. Then undergoes significant glycosylation in the testis and that the majority of these glycoconjugates are removed by the time sperm reach the caput epididymis. As to expression, highly expressed in testis, where it is localized in the acrosome of postmeiotic stages of spermiogenesis (round and elongating spermatids and in ejaculated spermatozoa) (at protein level). Poorly expressed in placenta and fetal lung.

The protein resides in the cytoplasmic vesicle. The protein localises to the secretory vesicle. It is found in the acrosome. Functionally, involved in fertilization ability of sperm. The chain is Sperm equatorial segment protein 1 from Homo sapiens (Human).